An 876-amino-acid polypeptide reads, in one-letter code: MSKSTAEIRQAFLDFFHSKGHQVVASSSLVPHNDPTLLFTNAGMNQFKDVFLGLDKRNYSRATTSQRCVRAGGKHNDLENVGYTARHHTFFEMLGNFSFGDYFKHDAIQFAWELLTSEKWFALPKERLWVTVYESDDEAYEIWEKEVGIPRERIIRIGDNKGAPYASDNFWQMGDTGPCGPCTEIFYDHGDHIWGGPPGSPEEDGDRYIEIWNIVFMQFNRQADGTMEPLPKPSVDTGMGLERIAAVLQHVNSNYDIDLFRTLIQAVAKVTGATDLSNKSLRVIADHIRSCAFLIADGVMPSNESRGYVLRRIIRRAVRHGNMLGAKETFFYKLVGPLIDVMGSAGEDLKRQQAQVEQVLKTEEEQFARTLERGLALLDEELAKLSGDTLDGETAFRLYDTYGFPVDLTADVCRERNIKVDEAGFDAAMEEQRRRAREASGFGADYNAMIRVDSASEFKGYDHLELNGKVTALFVDGKAVDAINAGQEAVVVLDQTPFYAESGGQVGDKGELKGANFSFAVEDTQKYGQAIGHIGKLAAGSLKVGDAVQADVDEARRARIRLNHSATHLMHAALRQVLGTHVSQKGSLVNDKVLRFDFSHNEAMKPEEIRAVEDLVNAQIRRNLPIETNIMDLEAAKAKGAMALFGEKYDERVRVLSMGDFSTELCGGTHASRTGDIGLFRIISESGTAAGVRRIEAVTGEGAIATVHADSDRLSEVAHLLKGDSNNLADKVRSVLERTRQLEKELQQLKEQAAAQESANLSSKAIDVNGVKLLVSELSGVEPKMLRTMVDDLKNQLGSTIIVLATVAEGKVSLIAGVSKDVTDRVKAGELIGMVAQQVGGKGGGRPDMAQAGGTDAAALPAALASVKGWVSAKLQ.

The residue at position 74 (lysine 74) is an N6-acetyllysine. Zn(2+) is bound by residues histidine 564, histidine 568, cysteine 666, and histidine 670.

This sequence belongs to the class-II aminoacyl-tRNA synthetase family. As to quaternary structure, homotetramer. The cofactor is Zn(2+).

The protein localises to the cytoplasm. The enzyme catalyses tRNA(Ala) + L-alanine + ATP = L-alanyl-tRNA(Ala) + AMP + diphosphate. Functionally, catalyzes the attachment of alanine to tRNA(Ala) in a two-step reaction: alanine is first activated by ATP to form Ala-AMP and then transferred to the acceptor end of tRNA(Ala). Also edits incorrectly charged Ser-tRNA(Ala) and Gly-tRNA(Ala) via its editing domain. In Escherichia coli O1:K1 / APEC, this protein is Alanine--tRNA ligase.